The chain runs to 213 residues: Pyrrolidone-carboxylate peptidase (213 aa).

Active-site residues include Glu-78, Cys-141, and His-165.

Belongs to the peptidase C15 family. In terms of assembly, homotetramer.

It localises to the cytoplasm. It carries out the reaction Release of an N-terminal pyroglutamyl group from a polypeptide, the second amino acid generally not being Pro.. In terms of biological role, removes 5-oxoproline from various penultimate amino acid residues except L-proline. The sequence is that of Pyrrolidone-carboxylate peptidase from Staphylococcus saprophyticus subsp. saprophyticus (strain ATCC 15305 / DSM 20229 / NCIMB 8711 / NCTC 7292 / S-41).